The following is a 329-amino-acid chain: GMP reductase (329 aa).

The Thioimidate intermediate role is filled by C178. V207–V230 contacts NADP(+).

The protein belongs to the IMPDH/GMPR family. GuaC type 2 subfamily.

The enzyme catalyses IMP + NH4(+) + NADP(+) = GMP + NADPH + 2 H(+). Its function is as follows. Catalyzes the irreversible NADPH-dependent deamination of GMP to IMP. It functions in the conversion of nucleobase, nucleoside and nucleotide derivatives of G to A nucleotides, and in maintaining the intracellular balance of A and G nucleotides. The polypeptide is GMP reductase (Lactococcus lactis subsp. lactis (strain IL1403) (Streptococcus lactis)).